Consider the following 309-residue polypeptide: Cytochrome c biogenesis protein CcsA (309 aa).

A run of 8 helical transmembrane segments spans residues 18–38, 43–63, 67–87, 102–122, 148–168, 216–236, 250–267, and 279–299; these read LGLL…GAFF, FFIV…QLLF, ISGH…TWGI, IIPS…CFVL, VMLS…VLFI, SILI…VWAN, TWAF…HMRI, and LATT…FLGI.

Belongs to the CcmF/CycK/Ccl1/NrfE/CcsA family. As to quaternary structure, may interact with ccs1.

Its subcellular location is the cellular thylakoid membrane. Functionally, required during biogenesis of c-type cytochromes (cytochrome c6 and cytochrome f) at the step of heme attachment. This is Cytochrome c biogenesis protein CcsA from Prochlorococcus marinus (strain MIT 9215).